The sequence spans 475 residues: UDP-N-acetylmuramoylalanine--D-glutamate ligase (475 aa).

130 to 136 lines the ATP pocket; sequence GTNGKTT.

Belongs to the MurCDEF family.

Its subcellular location is the cytoplasm. The catalysed reaction is UDP-N-acetyl-alpha-D-muramoyl-L-alanine + D-glutamate + ATP = UDP-N-acetyl-alpha-D-muramoyl-L-alanyl-D-glutamate + ADP + phosphate + H(+). It functions in the pathway cell wall biogenesis; peptidoglycan biosynthesis. Its function is as follows. Cell wall formation. Catalyzes the addition of glutamate to the nucleotide precursor UDP-N-acetylmuramoyl-L-alanine (UMA). This chain is UDP-N-acetylmuramoylalanine--D-glutamate ligase, found in Corynebacterium efficiens (strain DSM 44549 / YS-314 / AJ 12310 / JCM 11189 / NBRC 100395).